Here is a 329-residue protein sequence, read N- to C-terminus: Aspartate--ammonia ligase (329 aa).

This sequence belongs to the class-II aminoacyl-tRNA synthetase family. AsnA subfamily.

It localises to the cytoplasm. The enzyme catalyses L-aspartate + NH4(+) + ATP = L-asparagine + AMP + diphosphate + H(+). The protein operates within amino-acid biosynthesis; L-asparagine biosynthesis; L-asparagine from L-aspartate (ammonia route): step 1/1. This Ureaplasma parvum serovar 3 (strain ATCC 27815 / 27 / NCTC 11736) protein is Aspartate--ammonia ligase.